Here is a 228-residue protein sequence, read N- to C-terminus: 6-carboxyhexanoate--CoA ligase (228 aa).

Belongs to the BioW family. Homodimer. Mg(2+) serves as cofactor.

It carries out the reaction heptanedioate + ATP + CoA = 6-carboxyhexanoyl-CoA + AMP + diphosphate. Its pathway is metabolic intermediate metabolism; pimeloyl-CoA biosynthesis; pimeloyl-CoA from pimelate: step 1/1. In terms of biological role, catalyzes the transformation of pimelate into pimeloyl-CoA with concomitant hydrolysis of ATP to AMP. The sequence is that of 6-carboxyhexanoate--CoA ligase from Staphylococcus epidermidis (strain ATCC 12228 / FDA PCI 1200).